The chain runs to 507 residues: Lysine--tRNA ligase (507 aa).

Glu-416 and Glu-423 together coordinate Mg(2+).

The protein belongs to the class-II aminoacyl-tRNA synthetase family. Homodimer. It depends on Mg(2+) as a cofactor.

Its subcellular location is the cytoplasm. The enzyme catalyses tRNA(Lys) + L-lysine + ATP = L-lysyl-tRNA(Lys) + AMP + diphosphate. This chain is Lysine--tRNA ligase, found in Hahella chejuensis (strain KCTC 2396).